The following is a 642-amino-acid chain: Threonine--tRNA ligase (642 aa).

A TGS domain is found at methionine 1–threonine 61. The catalytic stretch occupies residues aspartate 243–proline 534. Zn(2+) is bound by residues cysteine 334, histidine 385, and histidine 511.

Belongs to the class-II aminoacyl-tRNA synthetase family. As to quaternary structure, homodimer. The cofactor is Zn(2+).

Its subcellular location is the cytoplasm. The catalysed reaction is tRNA(Thr) + L-threonine + ATP = L-threonyl-tRNA(Thr) + AMP + diphosphate + H(+). Functionally, catalyzes the attachment of threonine to tRNA(Thr) in a two-step reaction: L-threonine is first activated by ATP to form Thr-AMP and then transferred to the acceptor end of tRNA(Thr). Also edits incorrectly charged L-seryl-tRNA(Thr). The polypeptide is Threonine--tRNA ligase (Shewanella denitrificans (strain OS217 / ATCC BAA-1090 / DSM 15013)).